The sequence spans 184 residues: Protein FAM89A (184 aa).

The disordered stretch occupies residues 148–184 (YFQEQNSLHDRRDRGPPRDLSLPVSSLSSSDWILESI). Residues 154 to 164 (SLHDRRDRGPP) are compositionally biased toward basic and acidic residues. Residues 167 to 184 (LSLPVSSLSSSDWILESI) show a composition bias toward low complexity.

The protein belongs to the FAM89 family.

The polypeptide is Protein FAM89A (FAM89A) (Homo sapiens (Human)).